We begin with the raw amino-acid sequence, 193 residues long: NADH-quinone oxidoreductase subunit B (193 aa).

Positions 72, 73, 137, and 167 each coordinate [4Fe-4S] cluster.

This sequence belongs to the complex I 20 kDa subunit family. NDH-1 is composed of 14 different subunits. Subunits NuoB, C, D, E, F, and G constitute the peripheral sector of the complex. The cofactor is [4Fe-4S] cluster.

It localises to the cell inner membrane. It catalyses the reaction a quinone + NADH + 5 H(+)(in) = a quinol + NAD(+) + 4 H(+)(out). Functionally, NDH-1 shuttles electrons from NADH, via FMN and iron-sulfur (Fe-S) centers, to quinones in the respiratory chain. The immediate electron acceptor for the enzyme in this species is believed to be ubiquinone. Couples the redox reaction to proton translocation (for every two electrons transferred, four hydrogen ions are translocated across the cytoplasmic membrane), and thus conserves the redox energy in a proton gradient. The protein is NADH-quinone oxidoreductase subunit B of Caulobacter vibrioides (strain ATCC 19089 / CIP 103742 / CB 15) (Caulobacter crescentus).